Here is a 249-residue protein sequence, read N- to C-terminus: MTYDVLSAIASPIIVALDYTNISKALAFVDLISPLYCRLKIGKIMFTRFGPELIIKLQQRGFDIFLDLKYHDIPNTVAGAVSAAADLGVWMISLHAIGGEKMMAAACNALSNFGLGVPKLIAVTVLTSLSDEDLQIIGIPSTASDFAIRLAILAKNCGLDGVVCSAQEAEHIKNICGHHFTIVTPGIRLATDELGDQCRIMTVHQAQQAGVNYMVIGRPITQATKPNCRLVEILNSLKITANSVALSSN.

Substrate is bound by residues D18, K40, 67–76, T127, R188, Q197, G217, and R218; that span reads DLKYHDIPNT. Catalysis depends on K69, which acts as the Proton donor.

This sequence belongs to the OMP decarboxylase family. Type 1 subfamily. As to quaternary structure, homodimer.

It carries out the reaction orotidine 5'-phosphate + H(+) = UMP + CO2. Its pathway is pyrimidine metabolism; UMP biosynthesis via de novo pathway; UMP from orotate: step 2/2. Its function is as follows. Catalyzes the decarboxylation of orotidine 5'-monophosphate (OMP) to uridine 5'-monophosphate (UMP). The sequence is that of Orotidine 5'-phosphate decarboxylase from Baumannia cicadellinicola subsp. Homalodisca coagulata.